The sequence spans 138 residues: MLQSNRFAIYAIGKIKKHWIRDGINQYKKRMPELIINELKTFNLNNLRSNNNIIIVLSEEGKQFNSIELCSLLLNFKNKKINFLIGDTDGISSDIKENSDLILSLSPLTFPHELARLILIEQIYRAVSISSNSPYHRS.

S-adenosyl-L-methionine contacts are provided by residues glycine 86 and 105–110; that span reads LSPLTF.

It belongs to the RNA methyltransferase RlmH family. As to quaternary structure, homodimer.

Its subcellular location is the cytoplasm. The catalysed reaction is pseudouridine(1915) in 23S rRNA + S-adenosyl-L-methionine = N(3)-methylpseudouridine(1915) in 23S rRNA + S-adenosyl-L-homocysteine + H(+). Functionally, specifically methylates the pseudouridine at position 1915 (m3Psi1915) in 23S rRNA. The protein is Ribosomal RNA large subunit methyltransferase H of Prochlorococcus marinus (strain MIT 9215).